Reading from the N-terminus, the 86-residue chain is Small ribosomal subunit protein bS20 (86 aa).

It belongs to the bacterial ribosomal protein bS20 family.

In terms of biological role, binds directly to 16S ribosomal RNA. The protein is Small ribosomal subunit protein bS20 of Mycolicibacterium gilvum (strain PYR-GCK) (Mycobacterium gilvum (strain PYR-GCK)).